The primary structure comprises 1357 residues: DNA-directed RNA polymerase subunit beta (1357 aa).

It belongs to the RNA polymerase beta chain family. The RNAP catalytic core consists of 2 alpha, 1 beta, 1 beta' and 1 omega subunit. When a sigma factor is associated with the core the holoenzyme is formed, which can initiate transcription.

It catalyses the reaction RNA(n) + a ribonucleoside 5'-triphosphate = RNA(n+1) + diphosphate. Its function is as follows. DNA-dependent RNA polymerase catalyzes the transcription of DNA into RNA using the four ribonucleoside triphosphates as substrates. This chain is DNA-directed RNA polymerase subunit beta, found in Pseudomonas putida (strain W619).